The following is a 95-amino-acid chain: Costars family protein WS02710_H03 (95 aa).

This sequence belongs to the costars family.

This chain is Costars family protein WS02710_H03, found in Picea sitchensis (Sitka spruce).